The following is a 636-amino-acid chain: Chaperone protein DnaK (636 aa).

T203 bears the Phosphothreonine; by autocatalysis mark. Residues 602 to 636 (VYGKQQEGAPAQEEPSAEGKKADDEGTVEGEFREV) form a disordered region. Over residues 618–636 (AEGKKADDEGTVEGEFREV) the composition is skewed to basic and acidic residues.

It belongs to the heat shock protein 70 family.

Functionally, acts as a chaperone. This chain is Chaperone protein DnaK, found in Dehalococcoides mccartyi (strain CBDB1).